A 206-amino-acid polypeptide reads, in one-letter code: MIVQKKKHRSNRWLLEHFQDQYVKAAKKNNIRSRAWFKLEQLDKNNKIFKIGMNVIDLGAAPGSWSQYASNRIGKKGRIIACDILPIRPITGVDIFQGDFRNKKTLNLMLNTFSNITFHLVMSDMAPNITGNFSIDMPRIIELCKLALKISEHVLSKNGIFLLKSFQGEGFNELYKEIKMLFKKIKICKPKTSRTRSREIFILATR.

Gly63, Trp65, Asp83, Asp99, and Asp124 together coordinate S-adenosyl-L-methionine. Lys164 acts as the Proton acceptor in catalysis.

This sequence belongs to the class I-like SAM-binding methyltransferase superfamily. RNA methyltransferase RlmE family.

The protein localises to the cytoplasm. The enzyme catalyses uridine(2552) in 23S rRNA + S-adenosyl-L-methionine = 2'-O-methyluridine(2552) in 23S rRNA + S-adenosyl-L-homocysteine + H(+). Functionally, specifically methylates the uridine in position 2552 of 23S rRNA at the 2'-O position of the ribose in the fully assembled 50S ribosomal subunit. The polypeptide is Ribosomal RNA large subunit methyltransferase E (Buchnera aphidicola subsp. Acyrthosiphon pisum (strain APS) (Acyrthosiphon pisum symbiotic bacterium)).